The primary structure comprises 154 residues: uncharacterized protein (154 aa).

Transmembrane regions (helical) follow at residues 19-39 (LFAY…GLLL) and 51-71 (ADQV…LLFA).

The protein localises to the cell membrane. This is an uncharacterized protein from Mycobacterium tuberculosis (strain CDC 1551 / Oshkosh).